A 736-amino-acid polypeptide reads, in one-letter code: Catalase-peroxidase (736 aa).

Positions 1-10 (MDAKTDDKGA) are enriched in basic and acidic residues. The disordered stretch occupies residues 1–26 (MDAKTDDKGAGKCPFSGGSHGHRNRD). The segment at residues 96–218 (WHSAGTYRIT…LGAVQMGLIY (123 aa)) is a cross-link (tryptophyl-tyrosyl-methioninium (Trp-Tyr) (with M-244)). The Proton acceptor role is filled by His-97. Residues 218 to 244 (YVNPEGPNGNPDPVAAAKDIRETFARM) constitute a cross-link (tryptophyl-tyrosyl-methioninium (Tyr-Met) (with W-96)). His-259 is a binding site for heme b.

The protein belongs to the peroxidase family. Peroxidase/catalase subfamily. In terms of assembly, homodimer or homotetramer. Heme b is required as a cofactor. Formation of the three residue Trp-Tyr-Met cross-link is important for the catalase, but not the peroxidase activity of the enzyme.

It carries out the reaction H2O2 + AH2 = A + 2 H2O. The catalysed reaction is 2 H2O2 = O2 + 2 H2O. Its function is as follows. Bifunctional enzyme with both catalase and broad-spectrum peroxidase activity. The polypeptide is Catalase-peroxidase (Rhodopseudomonas palustris (strain ATCC BAA-98 / CGA009)).